The chain runs to 1471 residues: MSFEVGTKCWYPHKEQGWIGGEVTKNDFFEGTFHLELKLEDGETVSIETNSFENDDDHPTLPVLRNPPILESTDDLTTLSYLNEPAVLHAIKKRYMNGQIYTYSGIVLIAANPFDKVDHLYSREMIQNYSSKRKDELEPHLFAIAEEAYRFMVHEKANQTVVVSGESGAGKTVSAKYIMRYFASVQESNNREGEVEMSQIESQILATNPIMEAFGNAKTTRNDNSSRFGKYLQILFDENTTIRGSKIRTYLLEKSRLVYQPETERNYHIFYQILEGLPEPVKQELHLSSPKDYHYTNQGGQPNIAGIDEAREYKITTDALSLVGINHETQLGIFKILAGLLHIGNIEMKMTRNDASLSSEEQNLQIACELLGIDPFNFAKWIVKKQIVTRSEKIVTNLNYNQALIARDSVAKFIYSTLFDWLVDNINKTLYDPELDQQDHVFSFIGILDIYGFEHFEKNSFEQFCINYANEKLQQEFNQHVFKLEQEEYVKEEIEWSFIEFSDNQPCIDLIENKLGILSLLDEESRLPSGSDESWASKLYSAFNKPPSNEVFSKPRFGQTKFIVSHYAVDVEYEVEGFIEKNRDSVSLGHLDVFKATTNPIFKQILDNRELRSDDAPEEQNTEKKIMIPARLSQKKPTLGSMFKKSLGELMAIINSTNVHYIRCIKPNSEKKPWEFDNLMVLSQLRACGVLETIRISCAGFPSRWTFDEFVQRYFLLTDYSLWSGILYNPDLPKEAIVNFCQSILDATISDSAKYQIGNTKIFFKAGMLAFLEKLRTNKMNEICIIIQKKIRARYYRLQYLQTMESIKKCQSQIRSLLVRTRVDHELKTRAAILLQTNIRALWKREYYRAAIGQIIKLQCTCKRKLILDSVNRKFMLMAAVIIQSYIRSYGHKTDYRTLKRSSILVQSAMRMQLARRRYIVLQKEVEERNIRASYGIGLLEEAIEFKNSFILNLEMLNDSYTRLTQLLQGDLSNIPSKQRQEYETIVNGYNDKISKLKTLQVEIMNTLNKKNALKERKKKQSSLIQSHMQSLAAIKGNKPSRLSDEVKSMKQELAFIENVIAQDFTTTYSANKNDKVKGLGIAGQQVKPKLVNVIRRESGNPDLLELLMDLNCYTLEVTEGYLKKVNVTEVNGDNVLGPIHVITTVVSSLVRNGLLIQSSKFISKVLLTVESIVMSLPKDETMLGGIFWLSNLSRLPAFAANQKTLYEANGGDEKDKLTLIYLNDLENETLKVFDKIYSTWLVKFMKHASAHIEIFDMVLNEKLFKNSGDEKFAKLFTFLNEFDAVLCKFQVVDSMHTKIFNDTLKYLNVMLFNDLITKCPALNWKYGYEVDRNIERLVSWFEPRIEDVRPNLIQIIQAVKILQLKISNLNEFKLLFDFWYALNPAQIQAILLKYKPANKGEAGVPNEILNYLANVIKRENLSLPGKMEIMLSAQFDSAKNHLRYDTSAITQNSNTEGLATVSKIIKLDRK.

A Myosin N-terminal SH3-like domain is found at 4-57; that stretch reads EVGTKCWYPHKEQGWIGGEVTKNDFFEGTFHLELKLEDGETVSIETNSFENDDD. The Myosin motor domain maps to 71-777; the sequence is ESTDDLTTLS…MLAFLEKLRT (707 aa). Residue 165–172 participates in ATP binding; it reads GESGAGKT. Residues 647-669 are actin-binding; sequence LGELMAIINSTNVHYIRCIKPNS. 5 IQ domains span residues 781–801, 804–824, 829–849, 876–898, and 899–928; these read NEIC…LQYL, MESI…TRVD, TRAA…EYYR, MLMA…DYRT, and LKRS…EVEE. Residues 938–1063 are a coiled coil; that stretch reads GLLEEAIEFK…LAFIENVIAQ (126 aa). Residues 1164 to 1419 form the Dilute domain; that stretch reads SKVLLTVESI…LNYLANVIKR (256 aa).

Belongs to the TRAFAC class myosin-kinesin ATPase superfamily. Myosin family. In terms of assembly, interacts with SHE2 and SHE3.

It localises to the bud. Functionally, part of the mRNA localization machinery that restricts accumulation of certain proteins to the bud and in the daughter cell. Recruited to specific mRNAs including the ASH1 mRNA, coding for a repressor of the HO endonuclease, via its interaction with SHE3. This Saccharomyces cerevisiae (strain ATCC 204508 / S288c) (Baker's yeast) protein is Myosin-4 (MYO4).